Here is a 623-residue protein sequence, read N- to C-terminus: Transketolase (623 aa).

Met-1 bears the N-acetylmethionine mark. Lys-6 and Lys-11 each carry N6-acetyllysine. His-37 serves as a coordination point for substrate. Ser-40 and His-77 together coordinate thiamine diphosphate. Position 104 is a phosphoserine (Ser-104). 123 to 125 (GSL) is a binding site for thiamine diphosphate. Lys-144 is subject to N6-acetyllysine. Residue Asp-155 participates in Mg(2+) binding. Thiamine diphosphate-binding residues include Gly-156 and Asn-185. Asn-185 and Leu-187 together coordinate Mg(2+). Residues Lys-204, Lys-232, and Lys-241 each carry the N6-acetyllysine modification. Thiamine diphosphate is bound by residues Lys-244 and His-258. A substrate-binding site is contributed by His-258. Lys-260 is subject to N6-acetyllysine. Position 275 is a phosphotyrosine (Tyr-275). The residue at position 287 (Thr-287) is a Phosphothreonine. Ser-295 carries the post-translational modification Phosphoserine. Residues Arg-318 and Ser-345 each coordinate substrate. Ser-345 bears the Phosphoserine mark. A Glycyl lysine isopeptide (Lys-Gly) (interchain with G-Cter in SUMO2) cross-link involves residue Lys-352. Glu-366 functions as the Proton donor in the catalytic mechanism. Residue Phe-392 coordinates thiamine diphosphate. 2 residues coordinate substrate: His-416 and Asp-424. Gln-428 is a thiamine diphosphate binding site. Arg-474 provides a ligand contact to substrate. N6-acetyllysine occurs at positions 538 and 603.

Belongs to the transketolase family. As to quaternary structure, homodimer. It depends on Mg(2+) as a cofactor. Requires Ca(2+) as cofactor. The cofactor is Mn(2+). Co(2+) is required as a cofactor. Thiamine diphosphate serves as cofactor.

The enzyme catalyses D-sedoheptulose 7-phosphate + D-glyceraldehyde 3-phosphate = aldehydo-D-ribose 5-phosphate + D-xylulose 5-phosphate. In terms of biological role, catalyzes the transfer of a two-carbon ketol group from a ketose donor to an aldose acceptor, via a covalent intermediate with the cofactor thiamine pyrophosphate. This is Transketolase (Tkt) from Rattus norvegicus (Rat).